The following is a 158-amino-acid chain: Succinate dehydrogenase assembly factor 2, mitochondrial (158 aa).

Residues 1 to 23 (MLRQLLATARRLLLPLATPKRCL) constitute a mitochondrion transit peptide.

It belongs to the SDHAF2 family. In terms of assembly, interacts with the flavoprotein subunit within the SDH catalytic dimer.

The protein resides in the mitochondrion matrix. Its function is as follows. Plays an essential role in the assembly of succinate dehydrogenase (SDH), an enzyme complex (also referred to as respiratory complex II) that is a component of both the tricarboxylic acid (TCA) cycle and the mitochondrial electron transport chain, and which couples the oxidation of succinate to fumarate with the reduction of ubiquinone (coenzyme Q) to ubiquinol. Required for flavinylation (covalent attachment of FAD) of the flavoprotein subunit of the SDH catalytic dimer. The sequence is that of Succinate dehydrogenase assembly factor 2, mitochondrial from Drosophila virilis (Fruit fly).